A 195-amino-acid polypeptide reads, in one-letter code: Protein GrpE (195 aa).

The segment at 1–30 is disordered; the sequence is MSEQEKVEQEEISAELETQNEQEKPMEETE. Positions 10–20 are enriched in acidic residues; sequence EEISAELETQN.

The protein belongs to the GrpE family. In terms of assembly, homodimer.

It is found in the cytoplasm. In terms of biological role, participates actively in the response to hyperosmotic and heat shock by preventing the aggregation of stress-denatured proteins, in association with DnaK and GrpE. It is the nucleotide exchange factor for DnaK and may function as a thermosensor. Unfolded proteins bind initially to DnaJ; upon interaction with the DnaJ-bound protein, DnaK hydrolyzes its bound ATP, resulting in the formation of a stable complex. GrpE releases ADP from DnaK; ATP binding to DnaK triggers the release of the substrate protein, thus completing the reaction cycle. Several rounds of ATP-dependent interactions between DnaJ, DnaK and GrpE are required for fully efficient folding. The polypeptide is Protein GrpE (Histophilus somni (strain 2336) (Haemophilus somnus)).